The chain runs to 511 residues: MKKADILVLDFGSQYTQLIARRLREQGVYAEILPFNVSLTDIKAKEPKGIILSGGPASVYATDAYFCDKGIFDLNLPILGICYGMQLMAHHYKATVAPAGHKEYGKANIEIKKDNALFKNLPKKQTVWMSHSDKVENLPQGFEVLATSENSPFCVFGNEDKKFFALQFHPEVQHSEFGKNILKNFAKYACNCESVWNMGSFAKTQAEKIREEVGNDKVLCAVSGGVDSSVVAALLASAIKEQVIVVFVDNGLLRSREKEQVEFMFKNTLGIDLISIDASEIFLSRLANVTDPEQKRKIIGNTFIEVFEEEAKKHKDVKYLAQGTLYTDIIESSVVGASKTIKSHHNVGGLPEKMNLKLIEPLKEIFKDEVRALGLELGLSKEVVYRHPFPGPGLAIRIMGEVNRPGLELLRKADVILLEELKSTGWYDKTWQAFCVLLNVKSVGVMGDNRTYDNAVCIRVVDASDGMTATFSHLPYEVLENISRRIINEVEGINRVVYDISSKPPATIEWE.

Positions 5–195 constitute a Glutamine amidotransferase type-1 domain; that stretch reads DILVLDFGSQ…AKYACNCESV (191 aa). C82 acts as the Nucleophile in catalysis. Active-site residues include H169 and E171. Residues 196–386 enclose the GMPS ATP-PPase domain; the sequence is WNMGSFAKTQ…LGLSKEVVYR (191 aa). Residue 223-229 participates in ATP binding; that stretch reads SGGVDSS.

Homodimer.

The catalysed reaction is XMP + L-glutamine + ATP + H2O = GMP + L-glutamate + AMP + diphosphate + 2 H(+). The protein operates within purine metabolism; GMP biosynthesis; GMP from XMP (L-Gln route): step 1/1. Its function is as follows. Catalyzes the synthesis of GMP from XMP. This is GMP synthase [glutamine-hydrolyzing] from Campylobacter jejuni (strain RM1221).